The chain runs to 201 residues: Proteasome subunit beta type-2 (201 aa).

An N-acetylmethionine modification is found at Met1.

Belongs to the peptidase T1B family. The 26S proteasome consists of a 20S proteasome core and two 19S regulatory subunits. The 20S proteasome core is a barrel-shaped complex made of 28 subunits that are arranged in four stacked rings. The two outer rings are each formed by seven alpha subunits, and the two inner rings are formed by seven beta subunits. The proteolytic activity is exerted by three beta-subunits PSMB5, PSMB6 and PSMB7.

Its subcellular location is the cytoplasm. The protein localises to the nucleus. Non-catalytic component of the 20S core proteasome complex involved in the proteolytic degradation of most intracellular proteins. This complex plays numerous essential roles within the cell by associating with different regulatory particles. Associated with two 19S regulatory particles, forms the 26S proteasome and thus participates in the ATP-dependent degradation of ubiquitinated proteins. The 26S proteasome plays a key role in the maintenance of protein homeostasis by removing misfolded or damaged proteins that could impair cellular functions, and by removing proteins whose functions are no longer required. Associated with the PA200 or PA28, the 20S proteasome mediates ubiquitin-independent protein degradation. This type of proteolysis is required in several pathways including spermatogenesis (20S-PA200 complex) or generation of a subset of MHC class I-presented antigenic peptides (20S-PA28 complex). In Bos taurus (Bovine), this protein is Proteasome subunit beta type-2 (PSMB2).